A 431-amino-acid polypeptide reads, in one-letter code: Gamma-glutamyl phosphate reductase (431 aa).

It belongs to the gamma-glutamyl phosphate reductase family.

The protein resides in the cytoplasm. It catalyses the reaction L-glutamate 5-semialdehyde + phosphate + NADP(+) = L-glutamyl 5-phosphate + NADPH + H(+). It participates in amino-acid biosynthesis; L-proline biosynthesis; L-glutamate 5-semialdehyde from L-glutamate: step 2/2. Functionally, catalyzes the NADPH-dependent reduction of L-glutamate 5-phosphate into L-glutamate 5-semialdehyde and phosphate. The product spontaneously undergoes cyclization to form 1-pyrroline-5-carboxylate. The chain is Gamma-glutamyl phosphate reductase from Methylobacterium nodulans (strain LMG 21967 / CNCM I-2342 / ORS 2060).